Reading from the N-terminus, the 936-residue chain is Protein translocase subunit SecA (936 aa).

ATP-binding positions include Gln-87, 105–109 (GEGKT), and Asp-515. 4 residues coordinate Zn(2+): Cys-920, Cys-922, Cys-931, and His-932.

Belongs to the SecA family. Monomer and homodimer. Part of the essential Sec protein translocation apparatus which comprises SecA, SecYEG and auxiliary proteins SecDF-YajC and YidC. Requires Zn(2+) as cofactor.

It is found in the cell inner membrane. Its subcellular location is the cytoplasm. It carries out the reaction ATP + H2O + cellular proteinSide 1 = ADP + phosphate + cellular proteinSide 2.. Its function is as follows. Part of the Sec protein translocase complex. Interacts with the SecYEG preprotein conducting channel. Has a central role in coupling the hydrolysis of ATP to the transfer of proteins into and across the cell membrane, serving both as a receptor for the preprotein-SecB complex and as an ATP-driven molecular motor driving the stepwise translocation of polypeptide chains across the membrane. This chain is Protein translocase subunit SecA, found in Paraburkholderia phytofirmans (strain DSM 17436 / LMG 22146 / PsJN) (Burkholderia phytofirmans).